A 146-amino-acid polypeptide reads, in one-letter code: Cyanate hydratase (146 aa).

Active-site residues include Arg87, Glu90, and Ser113.

It belongs to the cyanase family.

It catalyses the reaction cyanate + hydrogencarbonate + 3 H(+) = NH4(+) + 2 CO2. Catalyzes the reaction of cyanate with bicarbonate to produce ammonia and carbon dioxide. The protein is Cyanate hydratase of Trichormus variabilis (strain ATCC 29413 / PCC 7937) (Anabaena variabilis).